The following is a 626-amino-acid chain: ATP-dependent zinc metalloprotease FtsH (626 aa).

The Cytoplasmic segment spans residues 1–7; that stretch reads MNGNRPN. The chain crosses the membrane as a helical span at residues 8–28; that stretch reads YISLIFAALVILSLFWLVRSF. At 29-108 the chain is on the periplasmic side; sequence YFDTSAPSKM…VTGEKGVSSS (80 aa). The chain crosses the membrane as a helical span at residues 109–129; the sequence is FWVNVIGNVIFIGFLLFMFFF. The Cytoplasmic portion of the chain corresponds to 130–626; the sequence is MMRTISGRNN…RAAAGSEQDS (497 aa). 202 to 209 is an ATP binding site; that stretch reads GPPGTGKT. H424 is a Zn(2+) binding site. The active site involves E425. Zn(2+) contacts are provided by H428 and D501.

In the central section; belongs to the AAA ATPase family. It in the C-terminal section; belongs to the peptidase M41 family. As to quaternary structure, homohexamer. The cofactor is Zn(2+).

It is found in the cell inner membrane. Its function is as follows. Acts as a processive, ATP-dependent zinc metallopeptidase for both cytoplasmic and membrane proteins. Plays a role in the quality control of integral membrane proteins. The chain is ATP-dependent zinc metalloprotease FtsH from Pseudothermotoga lettingae (strain ATCC BAA-301 / DSM 14385 / NBRC 107922 / TMO) (Thermotoga lettingae).